A 633-amino-acid chain; its full sequence is DNA mismatch repair protein MutL (633 aa).

The tract at residues 338–407 (AAPEPERTLP…VPPPTLRAIP (70 aa)) is disordered. Residues 366 to 391 (PGSAFPAAARPAPASSAAQPPLSSSA) show a composition bias toward low complexity.

It belongs to the DNA mismatch repair MutL/HexB family.

This protein is involved in the repair of mismatches in DNA. It is required for dam-dependent methyl-directed DNA mismatch repair. May act as a 'molecular matchmaker', a protein that promotes the formation of a stable complex between two or more DNA-binding proteins in an ATP-dependent manner without itself being part of a final effector complex. The sequence is that of DNA mismatch repair protein MutL from Akkermansia muciniphila (strain ATCC BAA-835 / DSM 22959 / JCM 33894 / BCRC 81048 / CCUG 64013 / CIP 107961 / Muc).